A 212-amino-acid polypeptide reads, in one-letter code: uncharacterized protein (212 aa).

3 residues coordinate S-adenosyl-L-methionine: G53, E74, and D97.

The protein belongs to the methyltransferase superfamily. YrrT family.

In terms of biological role, could be a S-adenosyl-L-methionine-dependent methyltransferase. This is an uncharacterized protein from Bacillus mycoides (strain KBAB4) (Bacillus weihenstephanensis).